The primary structure comprises 104 residues: Co-chaperonin GroES (104 aa).

This sequence belongs to the GroES chaperonin family. Heptamer of 7 subunits arranged in a ring. Interacts with the chaperonin GroEL.

It is found in the cytoplasm. Its function is as follows. Together with the chaperonin GroEL, plays an essential role in assisting protein folding. The GroEL-GroES system forms a nano-cage that allows encapsulation of the non-native substrate proteins and provides a physical environment optimized to promote and accelerate protein folding. GroES binds to the apical surface of the GroEL ring, thereby capping the opening of the GroEL channel. This is Co-chaperonin GroES from Acidiphilium cryptum (strain JF-5).